A 67-amino-acid chain; its full sequence is Beta-defensin 123 (67 aa).

A signal peptide spans 1-20 (MKLLLLTLTVLLLLSQLTPG). 3 disulfides stabilise this stretch: cysteine 25/cysteine 52, cysteine 32/cysteine 46, and cysteine 36/cysteine 53.

Belongs to the beta-defensin family.

It is found in the secreted. Its function is as follows. Has antibacterial activity. This chain is Beta-defensin 123 (DEFB123), found in Gorilla gorilla gorilla (Western lowland gorilla).